Here is a 196-residue protein sequence, read N- to C-terminus: Pyridoxal 5'-phosphate synthase subunit PdxT (196 aa).

L-glutamine is bound at residue 56 to 58 (GES). The active-site Nucleophile is cysteine 85. Residues arginine 113 and 141–142 (IR) each bind L-glutamine. Residues histidine 177 and glutamate 179 each act as charge relay system in the active site.

The protein belongs to the glutaminase PdxT/SNO family. In terms of assembly, in the presence of PdxS, forms a dodecamer of heterodimers. Only shows activity in the heterodimer.

The enzyme catalyses aldehydo-D-ribose 5-phosphate + D-glyceraldehyde 3-phosphate + L-glutamine = pyridoxal 5'-phosphate + L-glutamate + phosphate + 3 H2O + H(+). It catalyses the reaction L-glutamine + H2O = L-glutamate + NH4(+). Its pathway is cofactor biosynthesis; pyridoxal 5'-phosphate biosynthesis. Functionally, catalyzes the hydrolysis of glutamine to glutamate and ammonia as part of the biosynthesis of pyridoxal 5'-phosphate. The resulting ammonia molecule is channeled to the active site of PdxS. The polypeptide is Pyridoxal 5'-phosphate synthase subunit PdxT (Methanospirillum hungatei JF-1 (strain ATCC 27890 / DSM 864 / NBRC 100397 / JF-1)).